The primary structure comprises 187 residues: Elongation factor P (187 aa).

It belongs to the elongation factor P family.

Its subcellular location is the cytoplasm. It functions in the pathway protein biosynthesis; polypeptide chain elongation. Involved in peptide bond synthesis. Stimulates efficient translation and peptide-bond synthesis on native or reconstituted 70S ribosomes in vitro. Probably functions indirectly by altering the affinity of the ribosome for aminoacyl-tRNA, thus increasing their reactivity as acceptors for peptidyl transferase. The chain is Elongation factor P from Mycobacterium marinum (strain ATCC BAA-535 / M).